We begin with the raw amino-acid sequence, 160 residues long: General odorant-binding protein 2 (160 aa).

An N-terminal signal peptide occupies residues 1 to 19 (MGYKLLLMYIAIVIDSVIG). Disulfide bonds link C38-C73, C69-C127, and C116-C136.

It belongs to the PBP/GOBP family. As to expression, antenna.

Present in the aqueous fluid surrounding olfactory sensory dendrites and are thought to aid in the capture and transport of hydrophobic odorants into and through this fluid. The chain is General odorant-binding protein 2 from Antheraea pernyi (Chinese oak silk moth).